The primary structure comprises 126 residues: Aspartate 1-decarboxylase (126 aa).

S25 acts as the Schiff-base intermediate with substrate; via pyruvic acid in catalysis. At S25 the chain carries Pyruvic acid (Ser). T57 is a substrate binding site. Residue Y58 is the Proton donor of the active site. G73–A75 serves as a coordination point for substrate.

Belongs to the PanD family. In terms of assembly, heterooctamer of four alpha and four beta subunits. Pyruvate serves as cofactor. Post-translationally, is synthesized initially as an inactive proenzyme, which is activated by self-cleavage at a specific serine bond to produce a beta-subunit with a hydroxyl group at its C-terminus and an alpha-subunit with a pyruvoyl group at its N-terminus.

It localises to the cytoplasm. The enzyme catalyses L-aspartate + H(+) = beta-alanine + CO2. Its pathway is cofactor biosynthesis; (R)-pantothenate biosynthesis; beta-alanine from L-aspartate: step 1/1. In terms of biological role, catalyzes the pyruvoyl-dependent decarboxylation of aspartate to produce beta-alanine. The sequence is that of Aspartate 1-decarboxylase from Acinetobacter baumannii (strain AB307-0294).